We begin with the raw amino-acid sequence, 569 residues long: Santalene synthase (569 aa).

Positions 284, 321, 325, and 460 each coordinate (2E)-geranyl diphosphate. Residues D321 and D325 each coordinate Mg(2+). A DDXXD motif motif is present at residues 321–325; it reads DDGYD. N463, T467, and E471 together coordinate Mg(2+).

Belongs to the terpene synthase family. Tpsb subfamily. Requires Mg(2+) as cofactor. It depends on Mn(2+) as a cofactor.

It carries out the reaction (2E,6E)-farnesyl diphosphate = (1S,5S,6R)-alpha-bergamotene + diphosphate. The catalysed reaction is (2E,6E)-farnesyl diphosphate = (+)-alpha-santalene + diphosphate. It catalyses the reaction (2E,6E)-farnesyl diphosphate = (-)-beta-santalene + diphosphate. Its function is as follows. Catalyzes a mixture of sesquiterpenoids from (2E,6E)-farnesyl diphosphate in fragrance biosynthesis. Catalyzes the formation of alpha-santalene, beta-santalene, epi-beta-santalene and exo-alpha-bergamotene, as well as traces of alpha-farnesene and beta-farnesene. Also acts with (Z,Z)-farnesyl diphosphate isomer, producing alpha-endo-bergamotene, alpha-santalene, (Z)-beta-farnesene, epi-beta-santalene, and beta-santalene. The sequence is that of Santalene synthase from Santalum album (White sandalwood).